A 347-amino-acid chain; its full sequence is GMP reductase (347 aa).

108–131 lines the NADP(+) pocket; the sequence is ADFEKTKQILDLNPALNFVCIDVA. K(+) contacts are provided by Gly181 and Gly183. Catalysis depends on Cys186, which acts as the Thioimidate intermediate. 216-239 serves as a coordination point for NADP(+); the sequence is IVSDGGCTTPGDVAKAFGGGADFV.

It belongs to the IMPDH/GMPR family. GuaC type 1 subfamily. As to quaternary structure, homotetramer.

The catalysed reaction is IMP + NH4(+) + NADP(+) = GMP + NADPH + 2 H(+). Catalyzes the irreversible NADPH-dependent deamination of GMP to IMP. It functions in the conversion of nucleobase, nucleoside and nucleotide derivatives of G to A nucleotides, and in maintaining the intracellular balance of A and G nucleotides. This is GMP reductase from Escherichia coli O139:H28 (strain E24377A / ETEC).